A 995-amino-acid polypeptide reads, in one-letter code: Pheromone-regulated membrane protein 10 (995 aa).

Disordered regions lie at residues 1 to 217 (MSSH…GEKH), 253 to 299 (GRVL…AVEM), 326 to 407 (DQSF…YIAP), and 425 to 508 (NPQD…NPDQ). Residues 74 to 88 (SNSSTTNNSTESSGS) show a composition bias toward low complexity. A compositionally biased stretch (basic and acidic residues) spans 110-121 (VKGESGDAHEGS). Positions 157-166 (SRGSVGSSSS) are enriched in low complexity. Over residues 170–187 (KGSDDVNEKETNLDHDYD) the composition is skewed to basic and acidic residues. Over residues 259–269 (GSGGGGGGGLI) the composition is skewed to gly residues. Over residues 283–296 (EEKEVGGGGEDDGA) the composition is skewed to acidic residues. Positions 326–347 (DQSFTYDEPNQSAGSSRNSTAP) are enriched in polar residues. Composition is skewed to basic and acidic residues over residues 359–371 (DDHK…DQGK) and 385–396 (GNDDPEDQHLLL). The segment covering 495-506 (EADDEDEDEENP) has biased composition (acidic residues). Helical transmembrane passes span 678 to 698 (VFLY…GGWL), 700 to 720 (IPVT…VSSM), 726 to 746 (SVFE…IGSI), 752 to 772 (FCFS…YIIL), 794 to 814 (IIYS…FGWV), 833 to 850 (KYRI…GLIN), 858 to 878 (PVMM…GKHF), 881 to 901 (VPEF…NVYS), 906 to 926 (GMAV…GIAS), and 965 to 985 (VEVS…VYPF).

This sequence belongs to the ThrE exporter (TC 2.A.79) family.

The protein localises to the membrane. The sequence is that of Pheromone-regulated membrane protein 10 from Pichia sorbitophila (strain ATCC MYA-4447 / BCRC 22081 / CBS 7064 / NBRC 10061 / NRRL Y-12695) (Hybrid yeast).